A 193-amino-acid polypeptide reads, in one-letter code: Ribonuclease HII (193 aa).

An RNase H type-2 domain is found at 15-193 (CIVAGIDEAG…PYHRRSFRCC (179 aa)). A divalent metal cation is bound by residues Asp-21, Glu-22, and Asp-112.

The protein belongs to the RNase HII family. Mn(2+) is required as a cofactor. Mg(2+) serves as cofactor.

The protein resides in the cytoplasm. The catalysed reaction is Endonucleolytic cleavage to 5'-phosphomonoester.. In terms of biological role, endonuclease that specifically degrades the RNA of RNA-DNA hybrids. The sequence is that of Ribonuclease HII from Rickettsia rickettsii (strain Iowa).